We begin with the raw amino-acid sequence, 602 residues long: Bifunctional xylanase/deacetylase (602 aa).

Residues 1–14 form the signal peptide; that stretch reads MSATLLVPSMTVKA. The 195-residue stretch at 17–211 folds into the GH11 domain; it reads TIYNNKTGNQ…SSGSASVYKN (195 aa). Glu108 acts as the Nucleophile in catalysis. The active-site Proton donor is the Glu198. The tract at residues 216 to 240 is disordered; it reads GGSSSSSGNQGGNQGGNTGNENAGN. The segment covering 224–233 has biased composition (gly residues); the sequence is NQGGNQGGNT. Residues 249–366 enclose the CBM6 domain; the sequence is DKIQCETMTK…DAYLDYFNNS (118 aa). Positions 402–578 constitute a NodB homology domain; the sequence is KLIALTFDDG…GLKNQGYTFV (177 aa).

Belongs to the glycosyl hydrolase 11 (cellulase G) family. Post-translationally, in the later growth phases, seems to undergo a proteolytic cleavage into a 30 kDa protein possessing xylanolytic activity.

The protein resides in the secreted. The catalysed reaction is Endohydrolysis of (1-&gt;4)-beta-D-xylosidic linkages in xylans.. It participates in glycan degradation; xylan degradation. Endo-acting xylanase which specifically cleaves internal linkages on the xylan backbone, releasing xylooligosaccharides. Is also probably able, via its C-terminal domain, to remove acetyl groups from acetylated xylan, and thus it is probably capable of hydrolyzing acetylated xylan. This is Bifunctional xylanase/deacetylase (xyn11A) from Pseudobutyrivibrio xylanivorans.